Consider the following 429-residue polypeptide: Cyclin-B2-1 (429 aa).

This sequence belongs to the cyclin family. Cyclin AB subfamily. As to quaternary structure, interacts with CDC20-1 and CDC20-2. In terms of tissue distribution, expressed in roots, stems, leaves, flowers and siliques.

This is Cyclin-B2-1 (CYCB2-1) from Arabidopsis thaliana (Mouse-ear cress).